Reading from the N-terminus, the 557-residue chain is MATSHGVLRSLDNAKTQSYHYLAIVIAGMGFFTDAYDLFCITAVTKLIGRLYYSDPTNHSPGILPTNVNNAITGVALCGTLAGQLFFGWLGDKLGRKKVYGITLTTMVGFALLSGLSFGSTPKTVVTSLCFFRFWLGFGIGGDYPLSAVIMSEYANQKTRGSFIAAVFAMQGVGILVAGGVAMFVSKLFLLYFPAPDFETDAVLSTQPEGDFVWRIVLMFGAVPAALTYYWRMKMPETARYTALVEGDHKKAVEDMAKVLDRNILSEESNTRIAIRPLESHSYGLFSSEFLNRHGLHLLGTTSTWFLLDIAFYSLQLTQKDIYPTSGLVYKASKMNAIEEVFQLSRAMFAVALIATVPGYWCTVFLIEKIGRFRIQLIGFLVMSVCMWFLGHNYRSFRGEESACKNGSKYSFCNGNPVMFAILFGLTLFFANFGPNSTTFIVPAELFPARLRSTCHGISAAAGKSGAIVGAFGVQSYIGNSHDKSKGTKQAIMALAVVNLLGFFFTFLVPETQGRSLEEISGEEKDFQGNNADEEISGERNGTRNASVDKSPETSMV.

At 1–20 (MATSHGVLRSLDNAKTQSYH) the chain is on the cytoplasmic side. Residues 21–41 (YLAIVIAGMGFFTDAYDLFCI) traverse the membrane as a helical segment. Residues 42–70 (TAVTKLIGRLYYSDPTNHSPGILPTNVNN) lie on the Extracellular side of the membrane. Residues 71 to 91 (AITGVALCGTLAGQLFFGWLG) traverse the membrane as a helical segment. Residues 92-98 (DKLGRKK) lie on the Cytoplasmic side of the membrane. A helical transmembrane segment spans residues 99–119 (VYGITLTTMVGFALLSGLSFG). The Extracellular portion of the chain corresponds to 120 to 130 (STPKTVVTSLC). Residues 131-151 (FFRFWLGFGIGGDYPLSAVIM) traverse the membrane as a helical segment. The Cytoplasmic portion of the chain corresponds to 152 to 162 (SEYANQKTRGS). Residues 163-183 (FIAAVFAMQGVGILVAGGVAM) form a helical membrane-spanning segment. At 184–210 (FVSKLFLLYFPAPDFETDAVLSTQPEG) the chain is on the extracellular side. The helical transmembrane segment at 211–231 (DFVWRIVLMFGAVPAALTYYW) threads the bilayer. Residues 232–294 (RMKMPETARY…LFSSEFLNRH (63 aa)) lie on the Cytoplasmic side of the membrane. Residues 295 to 315 (GLHLLGTTSTWFLLDIAFYSL) form a helical membrane-spanning segment. Residues 316–346 (QLTQKDIYPTSGLVYKASKMNAIEEVFQLSR) lie on the Extracellular side of the membrane. A helical membrane pass occupies residues 347–367 (AMFAVALIATVPGYWCTVFLI). Residues 368–369 (EK) lie on the Cytoplasmic side of the membrane. Residues 370 to 390 (IGRFRIQLIGFLVMSVCMWFL) traverse the membrane as a helical segment. At 391-414 (GHNYRSFRGEESACKNGSKYSFCN) the chain is on the extracellular side. N-linked (GlcNAc...) asparagine glycosylation is present at Asn-406. The chain crosses the membrane as a helical span at residues 415 to 435 (GNPVMFAILFGLTLFFANFGP). Residues 436–457 (NSTTFIVPAELFPARLRSTCHG) are Cytoplasmic-facing. Residues 458–478 (ISAAAGKSGAIVGAFGVQSYI) traverse the membrane as a helical segment. At 479–490 (GNSHDKSKGTKQ) the chain is on the extracellular side. Residues 491–511 (AIMALAVVNLLGFFFTFLVPE) form a helical membrane-spanning segment. Residues 512-557 (TQGRSLEEISGEEKDFQGNNADEEISGERNGTRNASVDKSPETSMV) lie on the Cytoplasmic side of the membrane. The interval 519–557 (EISGEEKDFQGNNADEEISGERNGTRNASVDKSPETSMV) is disordered. Residues 543–557 (TRNASVDKSPETSMV) are compositionally biased toward polar residues.

Belongs to the major facilitator superfamily. Phosphate:H(+) symporter (TC 2.A.1.9) family.

Its subcellular location is the cell membrane. It carries out the reaction phosphate(in) + H(+)(in) = phosphate(out) + H(+)(out). In terms of biological role, low-affinity transporter for external inorganic phosphate (Pi) that may be involved in the acquisition of phosphate released by arbuscular mycorrhizal (AM) fungi (e.g. Glomus versiforme and G.intraradices) during AM symbiosis; not required for mycorrhizal arbuscule development. In Medicago truncatula (Barrel medic), this protein is Low affinity inorganic phosphate transporter 8.